A 223-amino-acid polypeptide reads, in one-letter code: DNA mismatch repair protein MutH (223 aa).

Belongs to the MutH family.

Its subcellular location is the cytoplasm. Its function is as follows. Sequence-specific endonuclease that cleaves unmethylated GATC sequences. It is involved in DNA mismatch repair. This Shewanella sp. (strain W3-18-1) protein is DNA mismatch repair protein MutH.